Here is a 201-residue protein sequence, read N- to C-terminus: dTTP/UTP pyrophosphatase (201 aa).

The active-site Proton acceptor is Asp-80.

This sequence belongs to the Maf family. YhdE subfamily. A divalent metal cation is required as a cofactor.

It is found in the cytoplasm. The enzyme catalyses dTTP + H2O = dTMP + diphosphate + H(+). The catalysed reaction is UTP + H2O = UMP + diphosphate + H(+). Functionally, nucleoside triphosphate pyrophosphatase that hydrolyzes dTTP and UTP. May have a dual role in cell division arrest and in preventing the incorporation of modified nucleotides into cellular nucleic acids. This chain is dTTP/UTP pyrophosphatase, found in Novosphingobium aromaticivorans (strain ATCC 700278 / DSM 12444 / CCUG 56034 / CIP 105152 / NBRC 16084 / F199).